The primary structure comprises 95 residues: Aspartyl/glutamyl-tRNA(Asn/Gln) amidotransferase subunit C (95 aa).

Belongs to the GatC family. In terms of assembly, heterotrimer of A, B and C subunits.

It carries out the reaction L-glutamyl-tRNA(Gln) + L-glutamine + ATP + H2O = L-glutaminyl-tRNA(Gln) + L-glutamate + ADP + phosphate + H(+). The enzyme catalyses L-aspartyl-tRNA(Asn) + L-glutamine + ATP + H2O = L-asparaginyl-tRNA(Asn) + L-glutamate + ADP + phosphate + 2 H(+). Its function is as follows. Allows the formation of correctly charged Asn-tRNA(Asn) or Gln-tRNA(Gln) through the transamidation of misacylated Asp-tRNA(Asn) or Glu-tRNA(Gln) in organisms which lack either or both of asparaginyl-tRNA or glutaminyl-tRNA synthetases. The reaction takes place in the presence of glutamine and ATP through an activated phospho-Asp-tRNA(Asn) or phospho-Glu-tRNA(Gln). The sequence is that of Aspartyl/glutamyl-tRNA(Asn/Gln) amidotransferase subunit C from Geobacter sulfurreducens (strain ATCC 51573 / DSM 12127 / PCA).